We begin with the raw amino-acid sequence, 392 residues long: 8-amino-7-oxononanoate synthase (392 aa).

R21 is a substrate binding site. 108–109 (GF) serves as a coordination point for pyridoxal 5'-phosphate. Substrate is bound at residue H133. Pyridoxal 5'-phosphate contacts are provided by residues S181, 206 to 209 (DDAH), and 237 to 240 (TLSK). K240 carries the N6-(pyridoxal phosphate)lysine modification. T354 contacts substrate.

It belongs to the class-II pyridoxal-phosphate-dependent aminotransferase family. BioF subfamily. Homodimer. Requires pyridoxal 5'-phosphate as cofactor.

The enzyme catalyses 6-carboxyhexanoyl-[ACP] + L-alanine + H(+) = (8S)-8-amino-7-oxononanoate + holo-[ACP] + CO2. Its pathway is cofactor biosynthesis; biotin biosynthesis. Catalyzes the decarboxylative condensation of pimeloyl-[acyl-carrier protein] and L-alanine to produce 8-amino-7-oxononanoate (AON), [acyl-carrier protein], and carbon dioxide. The protein is 8-amino-7-oxononanoate synthase of Symbiobacterium thermophilum (strain DSM 24528 / JCM 14929 / IAM 14863 / T).